The primary structure comprises 665 residues: DNA ligase (665 aa).

NAD(+) contacts are provided by residues 32-36 (DSEYD), 81-82 (SL), and E110. Catalysis depends on K112, which acts as the N6-AMP-lysine intermediate. NAD(+) is bound by residues R133, E167, K283, and K307. Residues C401, C404, C419, and C424 each coordinate Zn(2+). One can recognise a BRCT domain in the interval 586–665 (EGHPDFSGKT…AAFIEKQNGI (80 aa)).

It belongs to the NAD-dependent DNA ligase family. LigA subfamily. Requires Mg(2+) as cofactor. Mn(2+) is required as a cofactor.

The enzyme catalyses NAD(+) + (deoxyribonucleotide)n-3'-hydroxyl + 5'-phospho-(deoxyribonucleotide)m = (deoxyribonucleotide)n+m + AMP + beta-nicotinamide D-nucleotide.. In terms of biological role, DNA ligase that catalyzes the formation of phosphodiester linkages between 5'-phosphoryl and 3'-hydroxyl groups in double-stranded DNA using NAD as a coenzyme and as the energy source for the reaction. It is essential for DNA replication and repair of damaged DNA. The sequence is that of DNA ligase from Staphylococcus epidermidis (strain ATCC 35984 / DSM 28319 / BCRC 17069 / CCUG 31568 / BM 3577 / RP62A).